The chain runs to 364 residues: Spermidine/putrescine import ATP-binding protein PotA (364 aa).

The region spanning 5 to 235 (LSFKDVSKGF…PVNRFVADFI (231 aa)) is the ABC transporter domain. 37–44 (GPSGCGKT) lines the ATP pocket.

Belongs to the ABC transporter superfamily. Spermidine/putrescine importer (TC 3.A.1.11.1) family. The complex is composed of two ATP-binding proteins (PotA), two transmembrane proteins (PotB and PotC) and a solute-binding protein (PotD).

Its subcellular location is the cell membrane. It catalyses the reaction ATP + H2O + polyamine-[polyamine-binding protein]Side 1 = ADP + phosphate + polyamineSide 2 + [polyamine-binding protein]Side 1.. Part of the ABC transporter complex PotABCD involved in spermidine/putrescine import. Responsible for energy coupling to the transport system. In Staphylococcus epidermidis (strain ATCC 35984 / DSM 28319 / BCRC 17069 / CCUG 31568 / BM 3577 / RP62A), this protein is Spermidine/putrescine import ATP-binding protein PotA.